The chain runs to 987 residues: Nuclear matrix constituent protein 1b (987 aa).

Residues 1–25 (MASPRSAGGVGGGGGGGGGSGGAAA) are disordered. The span at 8–24 (GGVGGGGGGGGGSGGAA) shows a compositional bias: gly residues. Coiled coils occupy residues 403–545 (LAEL…ERRA) and 594–717 (LSKI…DREA). 2 stretches are compositionally biased toward basic and acidic residues: residues 752–764 (SDIN…HDNS) and 898–908 (CKEHEYGDKGP). Disordered regions lie at residues 752-775 (SDIN…FGRK) and 887-987 (HDEA…FLIT). A compositionally biased stretch (polar residues) spans 944-954 (ATVSATETSNV). Over residues 956–973 (GPEDNNDSDEEDEEEEEE) the composition is skewed to acidic residues.

The protein belongs to the CRWN family. Interacts with SWI3C.

The protein resides in the nucleus matrix. It localises to the nucleus lamina. Its function is as follows. Architectural component of nuclear structure that plays different roles in controlling nuclear size and morphology. Involved in the modification of chromatin accessibility by interacting with SWI3C, a component of the chromatin-remodeling complex, to thus reduce the suppression effect of the complex. Acts as positive regulator of drought resistance and modulates root growth. Positively regulates the expression of genes related to root growth and drought resistance. The polypeptide is Nuclear matrix constituent protein 1b (Oryza sativa subsp. japonica (Rice)).